The chain runs to 394 residues: MAAESNFVDYVKIYCRSGKGGRGSTHFRREKYIPKGGPDGGDGGRGGHVFLRGNRNYWTLLHLRYDRHIMATNGQSGGAKRSTGANGEDRIIEVPCGTAVYDADTGEFITDITEHGQQVMLLQGGRGGHGNTFFKTATNQAPRYAQPGEPAQERMVIMQLKMLADVGLVGFPNAGKSTLLSVLTAAKPKIANYPFTTLEPNLGIVAYRDKRSFVMADIPGIIEGASSGKGLGLRFLRHIERNALLLFMIPADTDNIAKEYEILSRELVAYNEELAQKRKVLAITKCDLIDEELCEMLREELPTGLPVVFISAVAQQGLEELKDTLWKELSKETLHEPDSIVRQALDLTSLTWDEEDDLFPASIEDDEDEEGLDDIDFDLEIEYDNEGDDAPDQL.

The region spanning S5–L163 is the Obg domain. Residues H26–R45 form a disordered region. An OBG-type G domain is found at A164 to S330. Residues G170–S177, F195–E199, D217–G220, T284–D287, and S311–V313 each bind GTP. Residues S177 and T197 each contribute to the Mg(2+) site.

This sequence belongs to the TRAFAC class OBG-HflX-like GTPase superfamily. OBG GTPase family. Monomer. It depends on Mg(2+) as a cofactor.

Its subcellular location is the cytoplasm. Functionally, an essential GTPase which binds GTP, GDP and possibly (p)ppGpp with moderate affinity, with high nucleotide exchange rates and a fairly low GTP hydrolysis rate. Plays a role in control of the cell cycle, stress response, ribosome biogenesis and in those bacteria that undergo differentiation, in morphogenesis control. The protein is GTPase Obg of Porphyromonas gingivalis (strain ATCC 33277 / DSM 20709 / CIP 103683 / JCM 12257 / NCTC 11834 / 2561).